The chain runs to 106 residues: Oncosphere antigen B (106 aa).

One can recognise a Fibronectin type-III domain in the interval 11 to 106 (LPQHFRWSQV…QSELRSMCIK (96 aa)).

The polypeptide is Oncosphere antigen B (ONCB) (Hydatigena taeniaeformis (Feline tapeworm)).